The sequence spans 511 residues: Histidine ammonia-lyase (511 aa).

Positions 142 to 144 (ASG) form a cross-link, 5-imidazolinone (Ala-Gly). Ser-143 carries the 2,3-didehydroalanine (Ser) modification.

Belongs to the PAL/histidase family. In terms of processing, contains an active site 4-methylidene-imidazol-5-one (MIO), which is formed autocatalytically by cyclization and dehydration of residues Ala-Ser-Gly.

The protein localises to the cytoplasm. The enzyme catalyses L-histidine = trans-urocanate + NH4(+). Its pathway is amino-acid degradation; L-histidine degradation into L-glutamate; N-formimidoyl-L-glutamate from L-histidine: step 1/3. This chain is Histidine ammonia-lyase, found in Brucella anthropi (strain ATCC 49188 / DSM 6882 / CCUG 24695 / JCM 21032 / LMG 3331 / NBRC 15819 / NCTC 12168 / Alc 37) (Ochrobactrum anthropi).